A 342-amino-acid polypeptide reads, in one-letter code: tRNA dimethylallyltransferase (342 aa).

39-46 (GPTGSGKT) serves as a coordination point for ATP. Residue 41–46 (TGSGKT) coordinates substrate. An interaction with substrate tRNA region spans residues 64-67 (DSMQ).

This sequence belongs to the IPP transferase family. Monomer. Mg(2+) is required as a cofactor.

It catalyses the reaction adenosine(37) in tRNA + dimethylallyl diphosphate = N(6)-dimethylallyladenosine(37) in tRNA + diphosphate. Its function is as follows. Catalyzes the transfer of a dimethylallyl group onto the adenine at position 37 in tRNAs that read codons beginning with uridine, leading to the formation of N6-(dimethylallyl)adenosine (i(6)A). This Chlamydia caviae (strain ATCC VR-813 / DSM 19441 / 03DC25 / GPIC) (Chlamydophila caviae) protein is tRNA dimethylallyltransferase.